The chain runs to 631 residues: Glutamine--fructose-6-phosphate aminotransferase [isomerizing] (631 aa).

The active-site Nucleophile; for GATase activity is Cys2. In terms of domain architecture, Glutamine amidotransferase type-2 spans 2–225 (CGIVGYIGTQ…NGEIARLTPL (224 aa)). 2 consecutive SIS domains span residues 298–446 (LDPQ…QRHS) and 480–621 (LAHE…VDQP). Lys626 (for Fru-6P isomerization activity) is an active-site residue.

As to quaternary structure, homodimer.

The protein resides in the cytoplasm. The catalysed reaction is D-fructose 6-phosphate + L-glutamine = D-glucosamine 6-phosphate + L-glutamate. Catalyzes the first step in hexosamine metabolism, converting fructose-6P into glucosamine-6P using glutamine as a nitrogen source. The chain is Glutamine--fructose-6-phosphate aminotransferase [isomerizing] from Synechocystis sp. (strain ATCC 27184 / PCC 6803 / Kazusa).